A 154-amino-acid chain; its full sequence is MNALILYGTETGNAEACATTISQVLADTVDTKVHDLADMTPRAMLDSGADLIVFATATYGEGEFAGGGAAFFETLRETKPDLSGLRFAVFGLGDSYYTTFNQAGATAATILASLGGTQVGDTARHDTSSGDDPEETAEEWAREILTALATPAVS.

A Flavodoxin-like domain is found at 3 to 145 (ALILYGTETG…TAEEWAREIL (143 aa)). Residues 9–13 (TETGN) and 89–120 (VFGLGDSYYTTFNQAGATAATILASLGGTQVG) each bind FMN.

It depends on FMN as a cofactor.

Involved in the degradation of cineol (eucalyptol). The FMN protein, cindoxin, shuttles electrons between the FAD-containing cindoxin reductase (CinB) and 1,8-cineole 2-endo-monooxygenase (CinA). The polypeptide is Cindoxin (cinC) (Citrobacter braakii).